The primary structure comprises 485 residues: Aspartyl/glutamyl-tRNA(Asn/Gln) amidotransferase subunit B (485 aa).

Belongs to the GatB/GatE family. GatB subfamily. Heterotrimer of A, B and C subunits.

The catalysed reaction is L-glutamyl-tRNA(Gln) + L-glutamine + ATP + H2O = L-glutaminyl-tRNA(Gln) + L-glutamate + ADP + phosphate + H(+). It carries out the reaction L-aspartyl-tRNA(Asn) + L-glutamine + ATP + H2O = L-asparaginyl-tRNA(Asn) + L-glutamate + ADP + phosphate + 2 H(+). Its function is as follows. Allows the formation of correctly charged Asn-tRNA(Asn) or Gln-tRNA(Gln) through the transamidation of misacylated Asp-tRNA(Asn) or Glu-tRNA(Gln) in organisms which lack either or both of asparaginyl-tRNA or glutaminyl-tRNA synthetases. The reaction takes place in the presence of glutamine and ATP through an activated phospho-Asp-tRNA(Asn) or phospho-Glu-tRNA(Gln). This is Aspartyl/glutamyl-tRNA(Asn/Gln) amidotransferase subunit B from Opitutus terrae (strain DSM 11246 / JCM 15787 / PB90-1).